A 601-amino-acid chain; its full sequence is Glutathione-regulated potassium-efflux system protein KefB (601 aa).

The next 13 membrane-spanning stretches (helical) occupy residues 4–24 (SDLL…VPLA), 29–49 (IGAV…GLGF), 55–75 (EILH…GLEL), 87–107 (IFGV…GLLM), 115–135 (AAVV…LQLM), 152–172 (VLLF…LLAG), 177–197 (HVNW…LIGG), 207–227 (FIAS…LVLG), 230–250 (LFME…GVLL), 268–288 (GLLL…GVLY), 291–311 (LLWV…VLYL), 326–346 (FAGV…LPAS), and 356–376 (ALLL…MKGI). Positions 400-519 (KPQVIIVGFG…AGVTQFSRET (120 aa)) constitute an RCK N-terminal domain.

This sequence belongs to the monovalent cation:proton antiporter 2 (CPA2) transporter (TC 2.A.37) family. KefB subfamily. As to quaternary structure, interacts with the regulatory subunit KefG.

Its subcellular location is the cell inner membrane. Its function is as follows. Pore-forming subunit of a potassium efflux system that confers protection against electrophiles. Catalyzes K(+)/H(+) antiport. This chain is Glutathione-regulated potassium-efflux system protein KefB, found in Klebsiella pneumoniae subsp. pneumoniae (strain ATCC 700721 / MGH 78578).